Consider the following 417-residue polypeptide: N-acetylmuramoyl-L-alanine amidase AmiC (417 aa).

The segment at residues 1–31 is a signal peptide (tat-type signal); that stretch reads MSGSNTAISRRRLLQGAGAMWLLSVSQVSLA. Residues 166 to 185 form a disordered region; sequence LEKQVPPAQSGPQPGKAGRD. Residues 190–404 form the MurNAc-LAA domain; the sequence is IMLDPGHGGE…VAESILAGIK (215 aa).

Belongs to the N-acetylmuramoyl-L-alanine amidase 3 family. Predicted to be exported by the Tat system. The position of the signal peptide cleavage has not been experimentally proven.

Its subcellular location is the periplasm. It catalyses the reaction Hydrolyzes the link between N-acetylmuramoyl residues and L-amino acid residues in certain cell-wall glycopeptides.. Cell-wall hydrolase involved in septum cleavage during cell division. The sequence is that of N-acetylmuramoyl-L-alanine amidase AmiC (amiC) from Escherichia coli O6:H1 (strain CFT073 / ATCC 700928 / UPEC).